The chain runs to 83 residues: Small ribosomal subunit protein bS20 (83 aa).

The protein belongs to the bacterial ribosomal protein bS20 family.

Functionally, binds directly to 16S ribosomal RNA. The sequence is that of Small ribosomal subunit protein bS20 from Staphylococcus aureus (strain JH1).